The chain runs to 469 residues: Glutamate--tRNA ligase (469 aa).

A 'HIGH' region motif is present at residues 9–19 (PSPTGFLHVGG). Positions 98, 100, 125, and 127 each coordinate Zn(2+). The short motif at 236 to 240 (KLSKR) is the 'KMSKS' region element. Lys239 contributes to the ATP binding site.

This sequence belongs to the class-I aminoacyl-tRNA synthetase family. Glutamate--tRNA ligase type 1 subfamily. As to quaternary structure, monomer. The cofactor is Zn(2+).

The protein localises to the cytoplasm. The catalysed reaction is tRNA(Glu) + L-glutamate + ATP = L-glutamyl-tRNA(Glu) + AMP + diphosphate. In terms of biological role, catalyzes the attachment of glutamate to tRNA(Glu) in a two-step reaction: glutamate is first activated by ATP to form Glu-AMP and then transferred to the acceptor end of tRNA(Glu). The protein is Glutamate--tRNA ligase of Shewanella sp. (strain MR-4).